The chain runs to 160 residues: S-protein homolog 13 (160 aa).

A signal peptide spans 1-27; the sequence is MGRDLGWCFFVATVLLAAVLLPAPTIA.

This sequence belongs to the plant self-incompatibility (S1) protein family.

The protein resides in the secreted. This chain is S-protein homolog 13, found in Arabidopsis thaliana (Mouse-ear cress).